Consider the following 445-residue polypeptide: Glutamate--tRNA ligase 1 (445 aa).

The 'HIGH' region motif lies at 9 to 19; sequence PSPTGYLHVGN. The 'KMSKS' region signature appears at 238 to 242; the sequence is KISKR. K241 is an ATP binding site.

Belongs to the class-I aminoacyl-tRNA synthetase family. Glutamate--tRNA ligase type 1 subfamily. In terms of assembly, monomer.

Its subcellular location is the cytoplasm. It catalyses the reaction tRNA(Glu) + L-glutamate + ATP = L-glutamyl-tRNA(Glu) + AMP + diphosphate. Catalyzes the attachment of glutamate to tRNA(Glu) in a two-step reaction: glutamate is first activated by ATP to form Glu-AMP and then transferred to the acceptor end of tRNA(Glu). The protein is Glutamate--tRNA ligase 1 of Ehrlichia ruminantium (strain Gardel).